The primary structure comprises 623 residues: NADPH-dependent diflavin oxidoreductase 1 (623 aa).

Positions 8–153 (LLVLYASQTG…TLDPWMLSLW (146 aa)) constitute a Flavodoxin-like domain. Residues 14-19 (SQTGNA), 62-65 (STTG), and D135 contribute to the FMN site. Residues 221 to 467 (KPDCFLKMTR…SLPAPSQSLP (247 aa)) enclose the FAD-binding FR-type domain. Residues R369, 399–402 (RAFS), and 433–436 (GLCS) each bind FAD. NADP(+) is bound by residues T475, 541 to 542 (SR), 547 to 551 (KVYVQ), and D583. Residue W622 participates in FAD binding.

Belongs to the NADPH-dependent diflavin oxidoreductase NDOR1 family. It in the N-terminal section; belongs to the flavodoxin family. The protein in the C-terminal section; belongs to the flavoprotein pyridine nucleotide cytochrome reductase family. In terms of assembly, interacts with At5g18400. The cofactor is FAD. It depends on FMN as a cofactor. Widely expressed.

The protein localises to the cytoplasm. The protein resides in the nucleus. The catalysed reaction is 2 oxidized [2Fe-2S]-[protein] + NADPH = 2 reduced [2Fe-2S]-[protein] + NADP(+) + H(+). Its function is as follows. NADPH-dependent reductase which is a central component of the cytosolic iron-sulfur (Fe-S) protein assembly (CIA) machinery. Transfers electrons from NADPH via its FAD and FMN prosthetic groups to the [2Fe-2S] cluster of the anamorsin/DRE2 homolog, another key component of the CIA machinery. In turn, this reduced cluster provides electrons for assembly of cytosolic iron-sulfur cluster proteins. Catalyzes the NADP-dependent reduction of cytochrome c, but not cytochrome P450 in vitro. Required for embryo development. The sequence is that of NADPH-dependent diflavin oxidoreductase 1 (ATR3) from Arabidopsis thaliana (Mouse-ear cress).